Reading from the N-terminus, the 262-residue chain is Calbindin (262 aa).

Thr-2 is subject to N-acetylthreonine. 5 EF-hand domains span residues 12–47, 54–89, 99–134, 143–178, and 187–222; these read ISAA…LQQA, DLTP…EENF, KSSE…LLQK, KLTE…QENF, and MCAK…LCEK. Residues Asp-25, Asp-27, Asn-29, Tyr-31, and Glu-36 each contribute to the Ca(2+) site. Asp-112, Asp-114, Ser-116, Glu-123, Asp-156, Asn-158, Asp-160, Lys-162, Glu-167, Asp-200, Asp-202, Asn-204, Tyr-206, and Glu-211 together coordinate Ca(2+).

It belongs to the calbindin family. Highly abundant in supporting cells. Also present in hair cells.

In terms of biological role, buffers cytosolic calcium. May stimulate a membrane Ca(2+)-ATPase and a 3',5'-cyclic nucleotide phosphodiesterase. The sequence is that of Calbindin (CALB1) from Gallus gallus (Chicken).